Consider the following 642-residue polypeptide: Threonine--tRNA ligase (642 aa).

Residues 1–61 (MPVITLPDGS…ETDSTLSIIT (61 aa)) enclose the TGS domain. A catalytic region spans residues 243–534 (DHRKIGKQLD…LTEEFAGFFP (292 aa)). Zn(2+) is bound by residues cysteine 334, histidine 385, and histidine 511.

The protein belongs to the class-II aminoacyl-tRNA synthetase family. As to quaternary structure, homodimer. Requires Zn(2+) as cofactor.

The protein localises to the cytoplasm. It catalyses the reaction tRNA(Thr) + L-threonine + ATP = L-threonyl-tRNA(Thr) + AMP + diphosphate + H(+). Catalyzes the attachment of threonine to tRNA(Thr) in a two-step reaction: L-threonine is first activated by ATP to form Thr-AMP and then transferred to the acceptor end of tRNA(Thr). Also edits incorrectly charged L-seryl-tRNA(Thr). This is Threonine--tRNA ligase from Klebsiella pneumoniae (strain 342).